A 179-amino-acid polypeptide reads, in one-letter code: Auxin-responsive protein IAA15 (179 aa).

An EAR-like (transcriptional repression) motif is present at residues 21–25; that stretch reads LTLAL. The PB1 domain maps to 86 to 173; that stretch reads RKYVKVALDG…SCKRMRLMKT (88 aa).

Belongs to the Aux/IAA family. Homodimers and heterodimers.

The protein localises to the nucleus. Functionally, aux/IAA proteins are short-lived transcriptional factors that function as repressors of early auxin response genes at low auxin concentrations. Repression is thought to result from the interaction with auxin response factors (ARFs), proteins that bind to the auxin-responsive promoter element (AuxRE). Formation of heterodimers with ARF proteins may alter their ability to modulate early auxin response genes expression. The sequence is that of Auxin-responsive protein IAA15 (IAA15) from Arabidopsis thaliana (Mouse-ear cress).